The primary structure comprises 88 residues: Elongation factor 1-beta (88 aa).

Belongs to the EF-1-beta/EF-1-delta family.

Its function is as follows. Promotes the exchange of GDP for GTP in EF-1-alpha/GDP, thus allowing the regeneration of EF-1-alpha/GTP that could then be used to form the ternary complex EF-1-alpha/GTP/AAtRNA. This is Elongation factor 1-beta from Natronomonas pharaonis (strain ATCC 35678 / DSM 2160 / CIP 103997 / JCM 8858 / NBRC 14720 / NCIMB 2260 / Gabara) (Halobacterium pharaonis).